The following is a 285-amino-acid chain: Phosphate import ATP-binding protein PstB (285 aa).

One can recognise an ABC transporter domain in the interval 22–262 (MRAVDLTLGF…PQHEETVRYF (241 aa)). 54 to 61 (GPTGSGKT) lines the ATP pocket. The disordered stretch occupies residues 266-285 (RPAQGSDRGSSQTAGVAESQ). Polar residues predominate over residues 272–285 (DRGSSQTAGVAESQ).

The protein belongs to the ABC transporter superfamily. Phosphate importer (TC 3.A.1.7) family. In terms of assembly, the complex is composed of two ATP-binding proteins (PstB), two transmembrane proteins (PstC and PstA) and a solute-binding protein (PstS).

It is found in the cell membrane. The enzyme catalyses phosphate(out) + ATP + H2O = ADP + 2 phosphate(in) + H(+). Part of the ABC transporter complex PstSACB involved in phosphate import. Responsible for energy coupling to the transport system. The sequence is that of Phosphate import ATP-binding protein PstB from Mycobacterium intracellulare.